The following is a 314-amino-acid chain: Pathogenicity locus probable regulatory protein HrpR (314 aa).

Positions 11–239 constitute a Sigma-54 factor interaction domain; it reads TRWNVTALSA…LKSAANAICP (229 aa). ATP is bound by residues 39–46 and 101–110; these read GETGTGKD and SNGGTLYLDE. The segment at residues 281 to 300 is a DNA-binding region (H-T-H motif); that stretch reads FDAVLEELELPRRTLYHRMK.

Functionally, member of the two-component regulatory system HrpR/HrpS that regulates the activation of the sigma factor hrpL which itself induces the expression of hprD as well as other hrp loci which are involved in plant pathogenicity, hrmA and avr genes. Probably interacts with sigma-54. In Pseudomonas syringae pv. syringae, this protein is Pathogenicity locus probable regulatory protein HrpR (hrpR).